The primary structure comprises 72 residues: MMSKLGVLLTICLLLFPLTAVPLDGDQPADRPAERMQDGISSEHHPFFDSVKKKQQCCPPVACNMGCEPCCG.

An N-terminal signal peptide occupies residues M1 to A20. A propeptide spanning residues V21–V51 is cleaved from the precursor. Residue Q55 is modified to Pyrrolidone carboxylic acid. 3 disulfides stabilise this stretch: C57-C71, C58-C67, and C63-C70. The residue at position 69 (P69) is a 4-hydroxyproline. Position 71 is a cysteine amide (C71).

It belongs to the conotoxin M superfamily. Expressed by the venom duct.

The protein localises to the secreted. This chain is Conotoxin TxMMSK-04, found in Conus textile (Cloth-of-gold cone).